A 246-amino-acid chain; its full sequence is Phosducin (246 aa).

Residues 1 to 14 show a composition bias toward acidic residues; sequence MEEAASQSLEEDFE. Residues 1–70 form a disordered region; the sequence is MEEAASQSLE…DKDSKERMSR (70 aa). The 246-residue stretch at 1–246 folds into the Phosducin domain; sequence MEEAASQSLE…QTNTEDEDIE (246 aa). Basic and acidic residues predominate over residues 58–69; that stretch reads SRDDKDSKERMS. Ser73 bears the Phosphoserine; by PKA mark. The tract at residues 111-246 is thioredoxin fold; it reads YGFVYELETG…QTNTEDEDIE (136 aa).

This sequence belongs to the phosducin family. Interacts with CRX. Forms a complex with the beta and gamma subunits of the GTP-binding protein, transducin. Light-induced changes in cyclic nucleotide levels modulate the phosphorylation of this protein by cAMP kinase.

It localises to the cytoplasm. The protein localises to the cytosol. The protein resides in the nucleus. It is found in the cell projection. Its subcellular location is the cilium. It localises to the photoreceptor outer segment. The protein localises to the photoreceptor inner segment. Functionally, inhibits the transcriptional activation activity of the cone-rod homeobox CRX. May participate in the regulation of visual phototransduction or in the integration of photoreceptor metabolism. In Rattus norvegicus (Rat), this protein is Phosducin (Pdc).